Here is a 104-residue protein sequence, read N- to C-terminus: UPF0145 protein DET1617 (104 aa).

The protein belongs to the UPF0145 family.

In Dehalococcoides mccartyi (strain ATCC BAA-2266 / KCTC 15142 / 195) (Dehalococcoides ethenogenes (strain 195)), this protein is UPF0145 protein DET1617.